Here is a 275-residue protein sequence, read N- to C-terminus: Large ribosomal subunit protein uL2 (275 aa).

Residues 225–275 form a disordered region; that stretch reads MNPIDHPHGGGEGRTSGGRHPVTPWGKPTKGKKTRSNKKTDRLIMRRRQTQ.

Belongs to the universal ribosomal protein uL2 family. In terms of assembly, part of the 50S ribosomal subunit. Forms a bridge to the 30S subunit in the 70S ribosome.

One of the primary rRNA binding proteins. Required for association of the 30S and 50S subunits to form the 70S ribosome, for tRNA binding and peptide bond formation. It has been suggested to have peptidyltransferase activity; this is somewhat controversial. Makes several contacts with the 16S rRNA in the 70S ribosome. The protein is Large ribosomal subunit protein uL2 of Paramagnetospirillum magneticum (strain ATCC 700264 / AMB-1) (Magnetospirillum magneticum).